We begin with the raw amino-acid sequence, 626 residues long: Carnitine O-acetyltransferase (626 aa).

Lys93 is subject to N6-succinyllysine. Lys261 bears the N6-acetyllysine; alternate mark. Lys261 carries the post-translational modification N6-succinyllysine; alternate. Lys268 bears the N6-acetyllysine mark. Catalysis depends on His343, which acts as the Proton acceptor. CoA contacts are provided by residues Lys419 and 423 to 430 (KSEKLSPD). Residues Tyr452 and Ser454 each contribute to the (R)-carnitine site. Ser456 contacts CoA. Thr465 provides a ligand contact to (R)-carnitine. Residues Arg504 and Gln555 each contribute to the CoA site. Positions 624-626 (AKL) match the Microbody targeting signal motif.

The protein belongs to the carnitine/choline acetyltransferase family. Monomer.

The protein localises to the endoplasmic reticulum. Its subcellular location is the peroxisome. It localises to the mitochondrion inner membrane. The enzyme catalyses (R)-carnitine + acetyl-CoA = O-acetyl-(R)-carnitine + CoA. It carries out the reaction propanoyl-CoA + (R)-carnitine = O-propanoyl-(R)-carnitine + CoA. It catalyses the reaction butanoyl-CoA + (R)-carnitine = O-butanoyl-(R)-carnitine + CoA. The catalysed reaction is hexanoyl-CoA + (R)-carnitine = O-hexanoyl-(R)-carnitine + CoA. The enzyme catalyses octanoyl-CoA + (R)-carnitine = O-octanoyl-(R)-carnitine + CoA. It carries out the reaction decanoyl-CoA + (R)-carnitine = O-decanoyl-(R)-carnitine + CoA. It catalyses the reaction 3-methylbutanoyl-CoA + (R)-carnitine = O-3-methylbutanoyl-(R)-carnitine + CoA. The catalysed reaction is 2-methylpropanoyl-CoA + (R)-carnitine = O-isobutanoyl-(R)-carnitine + CoA. The enzyme catalyses 2-methylbutanoyl-CoA + (R)-carnitine = O-2-methylbutanoyl-(R)-carnitine + CoA. It carries out the reaction acetoacetyl-CoA + (R)-carnitine = O-3-oxobutanoyl-(R)-carnitine + CoA. It catalyses the reaction 3-hydroxybutanoyl-CoA + (R)-carnitine = O-3-hydroxybutanoyl-(R)-carnitine + CoA. The catalysed reaction is 4,8-dimethylnonanoyl-CoA + (R)-carnitine = O-4,8-dimethylnonanoyl-(R)-carnitine + CoA. The enzyme catalyses 2,6-dimethylheptanoyl-CoA + (R)-carnitine = O-2,6-dimethylheptanoyl-(R)-carnitine + CoA. In terms of biological role, catalyzes the reversible transfer of acyl groups from carnitine to coenzyme A (CoA) and regulates the acyl-CoA/CoA ratio. Also plays a crucial role in the transport of fatty acids for beta-oxidation. Responsible for the synthesis of short- and branched-chain acylcarnitines. Active towards some branched-chain amino acid oxidation pathway (BCAAO) intermediates. Trans-2-enoyl-CoAs and 2-methylacyl-CoAs are poor substrates. The chain is Carnitine O-acetyltransferase from Mus musculus (Mouse).